A 195-amino-acid polypeptide reads, in one-letter code: MYLINQNGWIEVICGSMFSGKSEELIRRVRRTQFAKQHAIVFKPCIDNRYSEEDVVSHNGLKVKAVPVSASKDIFEHITEEMDVIAIDEVQFFDGDIVEVVQVLANRGYRVIVAGLDQDFRGLPFGQVPQLMAIAEHVTKLQAVCSACGSPASRTQRLIDGEPAAFDDPIILVGASESYEPRCRHCHAVPTNKDK.

ATP is bound by residues 15–22 (GSMFSGKS) and 88–91 (DEVQ). Residue E89 is the Proton acceptor of the active site. Zn(2+)-binding residues include C145, C148, C183, and C186.

The protein belongs to the thymidine kinase family. Homotetramer.

The protein localises to the cytoplasm. It catalyses the reaction thymidine + ATP = dTMP + ADP + H(+). In Bacillus cereus (strain AH187), this protein is Thymidine kinase.